The sequence spans 127 residues: Small ribosomal subunit protein uS11 (127 aa).

Belongs to the universal ribosomal protein uS11 family. As to quaternary structure, part of the 30S ribosomal subunit. Interacts with proteins S7 and S18. Binds to IF-3.

Located on the platform of the 30S subunit, it bridges several disparate RNA helices of the 16S rRNA. Forms part of the Shine-Dalgarno cleft in the 70S ribosome. The polypeptide is Small ribosomal subunit protein uS11 (Prosthecochloris aestuarii (strain DSM 271 / SK 413)).